The primary structure comprises 1214 residues: Reverse gyrase (1214 aa).

Residues 1–37 (MKAIYRDMCPNCRGAITDERLAAKNPCDACLDEPISM) form an RG N-terminal-type zinc finger. Residues cysteine 9, cysteine 12, cysteine 27, and cysteine 30 each coordinate Zn(2+). Residues glutamine 89 and 106–113 (APTGMGKS) each bind ATP. In terms of domain architecture, Helicase ATP-binding spans 93-252 (VKRIIKGKSF…WEIIKLKKQL (160 aa)). The short motif at 213-216 (DDVD) is the DEAD box element. The tract at residues 635-1214 (DLVKSALMIV…YEEILRYVKS (580 aa)) is topoisomerase I. In terms of domain architecture, Toprim spans 639-802 (SALMIVESPN…VIKRIEFHEV (164 aa)). Glutamate 645 contributes to the Mg(2+) binding site. The segment at 719–748 (IKRCRDCGHQFVDWEEKGVCPRCGSRNVYD) adopts an RG C-terminal-type zinc-finger fold. 4 residues coordinate Zn(2+): cysteine 722, cysteine 725, cysteine 738, and cysteine 741. Aspartate 771 lines the Mg(2+) pocket. The region spanning 818–1212 (NEDRVNAQLV…ELYEEILRYV (395 aa)) is the Topo IA-type catalytic domain. The O-(5'-phospho-DNA)-tyrosine intermediate role is filled by tyrosine 955.

In the N-terminal section; belongs to the DEAD box helicase family. DDVD subfamily. It in the C-terminal section; belongs to the type IA topoisomerase family. As to quaternary structure, monomer. Zn(2+) is required as a cofactor. It depends on Mg(2+) as a cofactor.

The protein localises to the cytoplasm. It catalyses the reaction ATP + H2O = ADP + phosphate + H(+). Modifies the topological state of DNA by introducing positive supercoils in an ATP-dependent process. Increases the linking number in steps of +1. Binds to single-stranded DNA, transiently cleaves and then rejoins the ends, introducing a positive supercoil in the process. The scissile phosphodiester is attacked by the catalytic tyrosine of the enzyme, resulting in the formation of a DNA-(5'-phosphotyrosyl)-enzyme intermediate. Probably involved in rewinding DNA strands in regions of the chromosome that have opened up to allow replication, transcription, DNA repair and/or for DNA protection. The chain is Reverse gyrase from Pyrococcus furiosus (strain ATCC 43587 / DSM 3638 / JCM 8422 / Vc1).